We begin with the raw amino-acid sequence, 204 residues long: Peptidyl-prolyl cis-trans isomerase CYP20-1 (204 aa).

An N-terminal signal peptide occupies residues M1–A23. The 164-residue stretch at Y38–E201 folds into the PPIase cyclophilin-type domain.

It belongs to the cyclophilin-type PPIase family. Interacts with the PP2A A subunit PP2AA1/RCN1. As to expression, ubiquitous, mostly in aerial organs. Higher levels in leaf and buds, and lower levels in seedlings.

The protein localises to the endoplasmic reticulum. Its subcellular location is the secreted. The enzyme catalyses [protein]-peptidylproline (omega=180) = [protein]-peptidylproline (omega=0). With respect to regulation, binds cyclosporin A (CsA). CsA mediates some of its effects via an inhibitory action on PPIase. Functionally, PPIases accelerate the folding of proteins. It catalyzes the cis-trans isomerization of proline imidic peptide bonds in oligopeptides. Seems to be involved in root development. The polypeptide is Peptidyl-prolyl cis-trans isomerase CYP20-1 (CYP20-1) (Arabidopsis thaliana (Mouse-ear cress)).